Here is a 225-residue protein sequence, read N- to C-terminus: Protein-L-isoaspartate O-methyltransferase 2 (225 aa).

Ser73 is an active-site residue.

It belongs to the methyltransferase superfamily. L-isoaspartyl/D-aspartyl protein methyltransferase family.

The protein resides in the cytoplasm. It catalyses the reaction [protein]-L-isoaspartate + S-adenosyl-L-methionine = [protein]-L-isoaspartate alpha-methyl ester + S-adenosyl-L-homocysteine. Functionally, catalyzes the methyl esterification of L-isoaspartyl residues in peptides and proteins that result from spontaneous decomposition of normal L-aspartyl and L-asparaginyl residues. It plays a role in the repair and/or degradation of damaged proteins. This is Protein-L-isoaspartate O-methyltransferase 2 from Pelobacter propionicus (strain DSM 2379 / NBRC 103807 / OttBd1).